The chain runs to 394 residues: Quinolinate synthase (394 aa).

The iminosuccinate site is built by histidine 67 and serine 84. Cysteine 131 is a binding site for [4Fe-4S] cluster. Iminosuccinate contacts are provided by residues 163-165 (YMN) and serine 184. Cysteine 254 is a binding site for [4Fe-4S] cluster. Iminosuccinate is bound by residues 280-282 (HPE) and threonine 297. Cysteine 346 is a [4Fe-4S] cluster binding site.

This sequence belongs to the quinolinate synthase family. Type 3 subfamily. The cofactor is [4Fe-4S] cluster.

It is found in the cytoplasm. It carries out the reaction iminosuccinate + dihydroxyacetone phosphate = quinolinate + phosphate + 2 H2O + H(+). The protein operates within cofactor biosynthesis; NAD(+) biosynthesis; quinolinate from iminoaspartate: step 1/1. Its function is as follows. Catalyzes the condensation of iminoaspartate with dihydroxyacetone phosphate to form quinolinate. The protein is Quinolinate synthase of Streptomyces coelicolor (strain ATCC BAA-471 / A3(2) / M145).